A 639-amino-acid chain; its full sequence is Protein DYAD (639 aa).

Basic and acidic residues predominate over residues 201–226 (RHIDTRKNKEGEESSRVKDEVYKEEE). The tract at residues 201–256 (RHIDTRKNKEGEESSRVKDEVYKEEEMEKEEDDDDGNEIGGTKQEAKEITNGNRKR) is disordered. The span at 227–237 (MEKEEDDDDGN) shows a compositional bias: acidic residues. The region spanning 351–498 (GKVAPGGQDR…RKMEEDMGWL (148 aa)) is the PI-PLC X-box domain. The segment at 536–561 (NKGNQITESPQNREKGRKHDQQERSP) is disordered. The segment covering 546–558 (QNREKGRKHDQQE) has biased composition (basic and acidic residues).

In terms of tissue distribution, meiocytes (at protein level).

The protein localises to the nucleus. In terms of biological role, required for fertility. Involved in chromatid cohesion establishment, in chromosome structure during male and female meiosis (e.g. the synapse formation between homologous chromosomes, the recombination, and the cohesion of both chromatid arm and centromere), and in axial element formation. Regulates the switch from mitosis to the reductional meiosis division of megaspores prior to the female gametogenesis (megasporogenesis). In Arabidopsis thaliana (Mouse-ear cress), this protein is Protein DYAD (DYAD).